Consider the following 780-residue polypeptide: Vezatin (780 aa).

2 helical membrane passes run Ala140–Phe160 and Thr162–Ile182. Residues Val430 to Ala467 adopt a coiled-coil conformation. Disordered regions lie at residues Asp620–Thr718 and Gln757–Lys780. Positions Ser624 to Ala643 are enriched in polar residues. Basic and acidic residues-rich tracts occupy residues Glu647–Tyr663 and Thr690–Ala699. Residues Pro702–Ala711 are compositionally biased toward low complexity. Positions Phe761–Lys780 are enriched in acidic residues.

This sequence belongs to the vezatin family. As to quaternary structure, interacts with USH2A (via the cytoplasmic region); the interaction associates VEZT with the USH2 complex at the stereocilia base. Interacts with myosin MYO7A and the cadherin-catenins complex. As to expression, expressed in developing cochlear hair cells. Isoform 1, isoform 2 and isoform 3 are expressed in testis. In the seminiferous epithelium, present exclusively in the acrosome of spermatids (at protein level).

The protein localises to the cell membrane. It is found in the cell projection. Its subcellular location is the stereocilium membrane. The protein resides in the cell junction. It localises to the adherens junction. The protein localises to the nucleus. It is found in the cytoplasmic vesicle. Its subcellular location is the secretory vesicle. The protein resides in the acrosome. Plays a pivotal role in the establishment of adherens junctions and their maintenance in adult life. Required for morphogenesis of the preimplantation embryo, and for the implantation process. This chain is Vezatin, found in Mus musculus (Mouse).